We begin with the raw amino-acid sequence, 956 residues long: Ubiquitin carboxyl-terminal hydrolase CYLD (956 aa).

An interaction with TRIP region spans residues 106 to 593 (CEERFSLFKN…LEIMIGKKKG (488 aa)). 2 CAP-Gly domains span residues 153–198 (LAER…VFVA) and 253–286 (DVLPGKESLGYFVGVDMDNPIGNWDGRFDGVQLC). Residues 309-353 (SVTQERRPPKLAFMSRGVGDKGSSSHNKPKATGSTSDPGNRNRSE) are disordered. Polar residues predominate over residues 330 to 349 (GSSSHNKPKATGSTSDPGNR). Ser-387 is subject to Phosphoserine. Positions 392 to 411 (STDFDRSSPPLQPPPVNSLT) are disordered. The tract at residues 394-469 (DFDRSSPPLQ…LAMPPGNSHG (76 aa)) is interaction with TRAF2. Ser-418 and Ser-422 each carry phosphoserine. The interval 470 to 554 (LEVGSLAEVK…FASLQPVSNQ (85 aa)) is interaction with IKBKG/NEMO. In terms of domain architecture, CAP-Gly 3 spans 492–535 (GQPPGLNEVLAGLELEDECAGCTDGTFRGTRYFTCALKKALFVK). Residues 592 to 950 (KGIQGHYNSC…DAYMCMYQSP (359 aa)) form the USP domain. Catalysis depends on Cys-601, which acts as the Nucleophile. The interval 781 to 833 (LEDTPRQCRICGGLAMYECRECYDDPDISAGKIKQFCKTCNTQVHLHPKRLNH) is B-box. 8 residues coordinate Zn(2+): Cys-788, Cys-791, Cys-799, Cys-802, Cys-817, Cys-820, His-825, and His-833. Catalysis depends on His-871, which acts as the Proton acceptor.

It belongs to the peptidase C19 family. In terms of assembly, interacts (via CAP-Gly domain) with IKBKG/NEMO (via proline-rich C-terminal region). Interacts with TRAF2 and TRIP. Interacts with PLK1, DVL1, DVL3, MAVS, TBK1, IKKE and RIGI. Interacts (via CAP-Gly domain) with microtubules. Interacts with HDAC6 and BCL3. Interacts with MAP3K7. Identified in a complex with TRAF6 and SQSTM1. Interacts with OPTN and SQSTM1. Interacts with CEP350. Interacts with RNF31; the interaction is indirect and is mediated via SPATA2. Interacts with SPATA2 (via the PUB domain); the interaction is direct and recruits CYLD to the LUBAC complex, thereby regulating TNF-alpha-induced necroptosis. Ubiquitinated. Polyubiquitinated in hepatocytes treated with palmitic acid. Ubiquitination is mediated by E3 ligase TRIM47 and leads to proteasomal degradation. Post-translationally, phosphorylated on several serine residues by IKKA and/or IKKB in response to immune stimuli. Phosphorylation requires IKBKG. Phosphorylation abolishes TRAF2 deubiquitination, interferes with the activation of Jun kinases, and strongly reduces CD40-dependent gene activation by NF-kappa-B. Detected in fetal brain, testis, and skeletal muscle, and at a lower level in adult brain, leukocytes, liver, heart, kidney, spleen, ovary and lung. Isoform 2 is found in all tissues except kidney.

It localises to the cytoplasm. The protein localises to the perinuclear region. It is found in the cytoskeleton. Its subcellular location is the cell membrane. The protein resides in the microtubule organizing center. It localises to the centrosome. The protein localises to the spindle. It is found in the cilium basal body. The enzyme catalyses Thiol-dependent hydrolysis of ester, thioester, amide, peptide and isopeptide bonds formed by the C-terminal Gly of ubiquitin (a 76-residue protein attached to proteins as an intracellular targeting signal).. With respect to regulation, inhibited by phosphorylation at serine residues. Deubiquitinase that specifically cleaves 'Lys-63'- and linear 'Met-1'-linked polyubiquitin chains and is involved in NF-kappa-B activation and TNF-alpha-induced necroptosis. Negatively regulates NF-kappa-B activation by deubiquitinating upstream signaling factors. Contributes to the regulation of cell survival, proliferation and differentiation via its effects on NF-kappa-B activation. Negative regulator of Wnt signaling. Inhibits HDAC6 and thereby promotes acetylation of alpha-tubulin and stabilization of microtubules. Plays a role in the regulation of microtubule dynamics, and thereby contributes to the regulation of cell proliferation, cell polarization, cell migration, and angiogenesis. Required for normal cell cycle progress and normal cytokinesis. Inhibits nuclear translocation of NF-kappa-B. Plays a role in the regulation of inflammation and the innate immune response, via its effects on NF-kappa-B activation. Dispensable for the maturation of intrathymic natural killer cells, but required for the continued survival of immature natural killer cells. Negatively regulates TNFRSF11A signaling and osteoclastogenesis. Involved in the regulation of ciliogenesis, allowing ciliary basal bodies to migrate and dock to the plasma membrane; this process does not depend on NF-kappa-B activation. Ability to remove linear ('Met-1'-linked) polyubiquitin chains regulates innate immunity and TNF-alpha-induced necroptosis: recruited to the LUBAC complex via interaction with SPATA2 and restricts linear polyubiquitin formation on target proteins. Regulates innate immunity by restricting linear polyubiquitin formation on RIPK2 in response to NOD2 stimulation. Involved in TNF-alpha-induced necroptosis by removing linear ('Met-1'-linked) polyubiquitin chains from RIPK1, thereby regulating the kinase activity of RIPK1. Negatively regulates intestinal inflammation by removing 'Lys-63' linked polyubiquitin chain of NLRP6, thereby reducing the interaction between NLRP6 and PYCARD/ASC and formation of the NLRP6 inflammasome. Does not catalyze deubiquitination of heterotypic 'Lys-63'-/'Lys-48'-linked branched ubiquitin chains. Removes 'Lys-63' linked polyubiquitin chain of MAP3K7, which inhibits phosphorylation and blocks downstream activation of the JNK-p38 kinase cascades. Also removes 'Lys-63'-linked polyubiquitin chains of MAP3K1 and MA3P3K3, which inhibit their interaction with MAP2K1 and MAP2K2. This Homo sapiens (Human) protein is Ubiquitin carboxyl-terminal hydrolase CYLD.